The following is a 474-amino-acid chain: Synaptotagmin-17 (474 aa).

Positions 60-112 (WLMASRSSDKDGDSVHTASEVPLTPRTNSPDGRRSSSDTSKSTYSLTRRISSL) are disordered. Low complexity predominate over residues 96 to 112 (SDTSKSTYSLTRRISSL). Ser118 and Ser119 each carry phosphoserine. C2 domains lie at 184 to 310 (QLGM…HWWK) and 321 to 455 (ELGE…EQWH).

It belongs to the synaptotagmin family.

It localises to the membrane. Its function is as follows. Plays a role in dendrite formation by melanocytes. The sequence is that of Synaptotagmin-17 (SYT17) from Pongo abelii (Sumatran orangutan).